Here is a 302-residue protein sequence, read N- to C-terminus: GTP cyclohydrolase FolE2 (302 aa).

Belongs to the GTP cyclohydrolase IV family.

It catalyses the reaction GTP + H2O = 7,8-dihydroneopterin 3'-triphosphate + formate + H(+). The protein operates within cofactor biosynthesis; 7,8-dihydroneopterin triphosphate biosynthesis; 7,8-dihydroneopterin triphosphate from GTP: step 1/1. Functionally, converts GTP to 7,8-dihydroneopterin triphosphate. This Pseudoalteromonas translucida (strain TAC 125) protein is GTP cyclohydrolase FolE2.